The following is a 1257-amino-acid chain: Insulin receptor substrate 4 (1257 aa).

The region spanning 78–199 (EVCKRGYLRK…WYLLLSRLIL (122 aa)) is the PH domain. Residues 231-335 (YKDVWQVIVK…EKMRALCADE (105 aa)) form the IRS-type PTB domain. Disordered regions lie at residues 406–653 (VAHS…GGRF), 678–921 (IPEG…SSDY), and 1179–1257 (QDVA…KRGR). A compositionally biased stretch (basic residues) spans 408-424 (HSRRGRLHLPRGRRSRR). The short motif at 487-490 (YMPM) is the YXXM motif 1 element. Over residues 495-509 (SGNGRGSGGGQGSNG) the composition is skewed to gly residues. A compositionally biased stretch (low complexity) spans 510–524 (QGSSSHSSGGNQCSG). 2 stretches are compositionally biased toward gly residues: residues 525–542 (EGQG…GSGG) and 551–599 (GTAG…SGKG). Pro residues predominate over residues 627–640 (MPPPPPPPPPPPPA). A compositionally biased stretch (gly residues) spans 641-650 (GGTGGKGKSG). The segment at 678–800 (IPEGAARGPH…KNPRNPQGGS (123 aa)) is CRK-binding. 3 short sequence motifs (YXXM motif) span residues 700 to 703 (YVPM), 717 to 720 (YMPM), and 743 to 746 (YMMM). A compositionally biased stretch (pro residues) spans 750–761 (VSPPPAPSPPKA). Over residues 763–774 (DTNKEDDSKDND) the composition is skewed to basic and acidic residues. The YXXM motif 5 signature appears at 779–782 (YMFM). Low complexity predominate over residues 800 to 810 (SSSKSWSSYFS). Polar residues predominate over residues 815 to 826 (FRSSPLGQNDNS). The short motif at 828–831 (YVPM) is the YXXM motif 6 element. Over residues 840 to 855 (GLDKEVSYNWDPKDAA) the composition is skewed to basic and acidic residues. The segment at 895-897 (ITK) is GRB2-binding. At Tyr921 the chain carries Phosphotyrosine. Positions 921 to 924 (YVNM) match the YXXM motif 7 motif. Residues 1236-1257 (DTHVRMDFARRDNQFDSPKRGR) are compositionally biased toward basic and acidic residues.

Interacts with SOCS6 in response to stimulation with either insulin or IGF1. Interacts with CRK and CRKL. Interaction with CRK is stronger than with CRKL. Interacts with CRK via the phosphorylated YXXM motifs. Interacts with GRB2 and PIK3R1. Interacts with PLC-gamma, SHC1, PTK6, PPP4C and NISCH. Interacts with ASB4; this interaction promotes IRS4 proteasomal degradation. Post-translationally, phosphorylated on tyrosine residues in response to both insulin and IGF1 signaling. Phosphorylated on Tyr-921 in response to FGF2 signaling. Phosphorylation of Tyr-921 is required for GRB2, phospholipase C-gamma and phosphatidylinositol 3-kinase interaction. In terms of processing, ubiquitinated in a ASB4-dependent manner, leading to proteasomal degradation. In terms of tissue distribution, expressed in myoblasts. Expressed in liver and hepatocellular carcinoma.

It localises to the cell membrane. Its function is as follows. Acts as an interface between multiple growth factor receptors possessing tyrosine kinase activity, such as insulin receptor, IGF1R and FGFR1, and a complex network of intracellular signaling molecules containing SH2 domains. Involved in the IGF1R mitogenic signaling pathway. Promotes the AKT1 signaling pathway and BAD phosphorylation during insulin stimulation without activation of RPS6KB1 or the inhibition of apoptosis. Interaction with GRB2 enhances insulin-stimulated mitogen-activated protein kinase activity. May be involved in nonreceptor tyrosine kinase signaling in myoblasts. Plays a pivotal role in the proliferation/differentiation of hepatoblastoma cell through EPHB2 activation upon IGF1 stimulation. May play a role in the signal transduction in response to insulin and to a lesser extent in response to IL4 and GH on mitogenesis. Plays a role in growth, reproduction and glucose homeostasis. May act as negative regulators of the IGF1 signaling pathway by suppressing the function of IRS1 and IRS2. This is Insulin receptor substrate 4 (IRS4) from Homo sapiens (Human).